The following is a 340-amino-acid chain: Guanine nucleotide-binding protein subunit beta-4 (340 aa).

An N-acetylserine modification is found at S2. S2 carries the phosphoserine modification. WD repeat units follow at residues G53–A92, L95–R134, G141–T179, G182–S221, and G224–L263. At H266 the chain carries Phosphohistidine. WD repeat units lie at residues N268–V307 and G310–W339.

The protein belongs to the WD repeat G protein beta family. G proteins are composed of 3 units, alpha, beta and gamma. As to expression, strongly expressed in lung and placenta, whereas it is weakly expressed in brain and heart. Abundantly expressed in the axons and Schwann cells of peripheral nerves.

Guanine nucleotide-binding proteins (G proteins) are involved as a modulator or transducer in various transmembrane signaling systems. The beta and gamma chains are required for the GTPase activity, for replacement of GDP by GTP, and for G protein-effector interaction. In Homo sapiens (Human), this protein is Guanine nucleotide-binding protein subunit beta-4 (GNB4).